We begin with the raw amino-acid sequence, 765 residues long: Probable ATP-dependent RNA helicase DDX27 (765 aa).

3 positions are modified to phosphoserine: S23, S25, and S48. Positions L43–T63 are enriched in acidic residues. Disordered stretches follow at residues L43–A83 and K111–D179. The short motif at F55–F57 is the Required for interaction with the PEBOW complex element. Residues E129–D156 are compositionally biased toward basic and acidic residues. Phosphoserine is present on residues S135 and S146. Over residues T157–E172 the composition is skewed to acidic residues. The Nuclear localization signal motif lies at K164 to K169. The Q motif signature appears at L187–K215. The Helicase ATP-binding domain occupies I218–I392. Residue A231 to T238 participates in ATP binding. The DEAD box motif lies at D340–D343. One can recognise a Helicase C-terminal domain in the interval L426 to I572. Basic residues predominate over residues V716–S725.

The protein belongs to the DEAD box helicase family. DDX27/DRS1 subfamily. Associates with PeBoW complex, composed of BOP1, PES1 and WDR12. Interacts directly with BOP1 and PES1.

Its subcellular location is the nucleus. It localises to the nucleolus. It is found in the chromosome. The enzyme catalyses ATP + H2O = ADP + phosphate + H(+). Functionally, probable ATP-dependent RNA helicase. Component of the nucleolar ribosomal RNA (rRNA) processing machinery that regulates 3' end formation of ribosomal 47S rRNA. This is Probable ATP-dependent RNA helicase DDX27 (DDX27) from Homo sapiens (Human).